The chain runs to 82 residues: MQTAYWLMVMMMVWITAPLYEGGKPNDVIRGLVPDDLTPQFILRSLISRRRSDKDVRADQTCIWKTWCPPSLWRRHDRKGKD.

An N-terminal signal peptide occupies residues 1-22 (MQTAYWLMVMMMVWITAPLYEG). A propeptide spanning residues 23-57 (GKPNDVIRGLVPDDLTPQFILRSLISRRRSDKDVR) is cleaved from the precursor. A disulfide bond links cysteine 62 and cysteine 68. Tryptophan 64 is modified (D-tryptophan). Residues proline 69 and proline 70 each carry the 4-hydroxyproline modification. Residues 72 to 82 (LWRRHDRKGKD) constitute a propeptide that is removed on maturation.

The protein belongs to the conotoxin C superfamily. Consomatin family. As to expression, expressed by the venom duct.

The protein resides in the secreted. Moderately activates human somatostatin receptors (SSTR) with a preferential activation of SSTR1 and SSTR4. In vivo, does not cause behavioral changes in mice within a few minutes of intracranial injection, but causes a progressive loss of movement thereafter. Four to five hours after injection, mice recover, even with the highest dose tested. Shows antinociception and antihyperalgesia activities in two mouse models of acute pain, most probably by acting outside the central nervous system. The sequence is that of Consomatin Ro2 from Conus rolani (Cone snail).